Reading from the N-terminus, the 239-residue chain is Ribosomal RNA small subunit methyltransferase G (239 aa).

S-adenosyl-L-methionine is bound by residues glycine 77, phenylalanine 82, 128–129 (AE), and arginine 146. The disordered stretch occupies residues 216–239 (KRRQTSKKYPRKPGTPNKSPLVES).

It belongs to the methyltransferase superfamily. RNA methyltransferase RsmG family.

It is found in the cytoplasm. Specifically methylates the N7 position of guanine in position 535 of 16S rRNA. The protein is Ribosomal RNA small subunit methyltransferase G of Staphylococcus epidermidis (strain ATCC 35984 / DSM 28319 / BCRC 17069 / CCUG 31568 / BM 3577 / RP62A).